The sequence spans 59 residues: MAEEILNREYEVEYGGKRYWLRPSKAWVLQPPGKPGVVIALFKLPDGRTVRKAIMRLPP.

This sequence belongs to the Cren7 family. In terms of assembly, monomer. In terms of processing, methylated at multiple sites, to varying extents.

The protein resides in the chromosome. It localises to the cytoplasm. In terms of biological role, a chromatin protein, binds double-stranded DNA without sequence specificity. Constrains negative DNA supercoils. This is Chromatin protein Cren7 from Pyrobaculum neutrophilum (strain DSM 2338 / JCM 9278 / NBRC 100436 / V24Sta) (Thermoproteus neutrophilus).